The sequence spans 407 residues: uncharacterized protein (407 aa).

This is an uncharacterized protein from Mycobacterium tuberculosis (strain CDC 1551 / Oshkosh).